Consider the following 317-residue polypeptide: Acetyl-coenzyme A carboxylase carboxyl transferase subunit alpha (317 aa).

The CoA carboxyltransferase C-terminal domain occupies 37-292 (RLEKKAEKLR…RICLKKHLDD (256 aa)).

The protein belongs to the AccA family. As to quaternary structure, acetyl-CoA carboxylase is a heterohexamer composed of biotin carboxyl carrier protein (AccB), biotin carboxylase (AccC) and two subunits each of ACCase subunit alpha (AccA) and ACCase subunit beta (AccD).

It localises to the cytoplasm. The enzyme catalyses N(6)-carboxybiotinyl-L-lysyl-[protein] + acetyl-CoA = N(6)-biotinyl-L-lysyl-[protein] + malonyl-CoA. Its pathway is lipid metabolism; malonyl-CoA biosynthesis; malonyl-CoA from acetyl-CoA: step 1/1. Functionally, component of the acetyl coenzyme A carboxylase (ACC) complex. First, biotin carboxylase catalyzes the carboxylation of biotin on its carrier protein (BCCP) and then the CO(2) group is transferred by the carboxyltransferase to acetyl-CoA to form malonyl-CoA. The polypeptide is Acetyl-coenzyme A carboxylase carboxyl transferase subunit alpha (Syntrophotalea carbinolica (strain DSM 2380 / NBRC 103641 / GraBd1) (Pelobacter carbinolicus)).